A 535-amino-acid polypeptide reads, in one-letter code: CTP synthase (535 aa).

The segment at 1-266 (MKTKFIFITG…DERVVEKLNI (266 aa)) is amidoligase domain. CTP is bound at residue Ser14. Ser14 contacts UTP. Residues 15–20 (SIGKGL) and Asp72 contribute to the ATP site. The Mg(2+) site is built by Asp72 and Glu140. CTP contacts are provided by residues 147–149 (DIE), 187–192 (KTKPTQ), and Lys223. Residues 187 to 192 (KTKPTQ) and Lys223 contribute to the UTP site. The 243-residue stretch at 292 to 534 (RIAIVGKYVN…VRAALIQRDA (243 aa)) folds into the Glutamine amidotransferase type-1 domain. Gly354 serves as a coordination point for L-glutamine. Catalysis depends on Cys381, which acts as the Nucleophile; for glutamine hydrolysis. L-glutamine is bound by residues 382 to 385 (LGMQ), Glu405, and Arg462. Residues His507 and Glu509 contribute to the active site.

It belongs to the CTP synthase family. As to quaternary structure, homotetramer.

The catalysed reaction is UTP + L-glutamine + ATP + H2O = CTP + L-glutamate + ADP + phosphate + 2 H(+). It carries out the reaction L-glutamine + H2O = L-glutamate + NH4(+). The enzyme catalyses UTP + NH4(+) + ATP = CTP + ADP + phosphate + 2 H(+). It functions in the pathway pyrimidine metabolism; CTP biosynthesis via de novo pathway; CTP from UDP: step 2/2. Allosterically activated by GTP, when glutamine is the substrate; GTP has no effect on the reaction when ammonia is the substrate. The allosteric effector GTP functions by stabilizing the protein conformation that binds the tetrahedral intermediate(s) formed during glutamine hydrolysis. Inhibited by the product CTP, via allosteric rather than competitive inhibition. In terms of biological role, catalyzes the ATP-dependent amination of UTP to CTP with either L-glutamine or ammonia as the source of nitrogen. Regulates intracellular CTP levels through interactions with the four ribonucleotide triphosphates. This Pelobacter propionicus (strain DSM 2379 / NBRC 103807 / OttBd1) protein is CTP synthase.